A 467-amino-acid polypeptide reads, in one-letter code: Asparagine--tRNA ligase (467 aa).

The protein belongs to the class-II aminoacyl-tRNA synthetase family. Homodimer.

Its subcellular location is the cytoplasm. It carries out the reaction tRNA(Asn) + L-asparagine + ATP = L-asparaginyl-tRNA(Asn) + AMP + diphosphate + H(+). The sequence is that of Asparagine--tRNA ligase from Pasteurella multocida (strain Pm70).